The chain runs to 80 residues: NADH-ubiquinone oxidoreductase chain 5 (80 aa).

2 consecutive transmembrane segments (helical) span residues isoleucine 4 to methionine 24 and isoleucine 44 to isoleucine 64.

The protein belongs to the complex I subunit 5 family.

The protein localises to the mitochondrion inner membrane. It carries out the reaction a ubiquinone + NADH + 5 H(+)(in) = a ubiquinol + NAD(+) + 4 H(+)(out). In terms of biological role, core subunit of the mitochondrial membrane respiratory chain NADH dehydrogenase (Complex I) that is believed to belong to the minimal assembly required for catalysis. Complex I functions in the transfer of electrons from NADH to the respiratory chain. The immediate electron acceptor for the enzyme is believed to be ubiquinone. This Ceratitis capitata (Mediterranean fruit fly) protein is NADH-ubiquinone oxidoreductase chain 5 (ND5).